A 104-amino-acid chain; its full sequence is Proteasome subunit beta type-8 (104 aa).

The protein belongs to the peptidase T1B family. In terms of assembly, the 26S proteasome consists of a 20S proteasome core and two 19S regulatory subunits. The 20S proteasome core is composed of 28 subunits that are arranged in four stacked rings, resulting in a barrel-shaped structure. The two end rings are each formed by seven alpha subunits, and the two central rings are each formed by seven beta subunits. The catalytic chamber with the active sites is on the inside of the barrel. Component of the immunoproteasome, where it displaces the equivalent housekeeping subunit PSMB5. Component of the spermatoproteasome, a form of the proteasome specifically found in testis. Directly interacts with POMP.

Its subcellular location is the cytoplasm. The protein localises to the nucleus. It catalyses the reaction Cleavage of peptide bonds with very broad specificity.. Its function is as follows. The proteasome is a multicatalytic proteinase complex which is characterized by its ability to cleave peptides with Arg, Phe, Tyr, Leu, and Glu adjacent to the leaving group at neutral or slightly basic pH. The proteasome has an ATP-dependent proteolytic activity. This subunit is involved in antigen processing to generate class I binding peptides. May participate in the generation of spliced peptides resulting from the ligation of two separate proteasomal cleavage products that are not contiguous in the parental protein. Required for adipocyte differentiation. The protein is Proteasome subunit beta type-8 (PSMB8) of Sus scrofa (Pig).